A 133-amino-acid chain; its full sequence is Large ribosomal subunit protein bL17 (133 aa).

This sequence belongs to the bacterial ribosomal protein bL17 family. As to quaternary structure, part of the 50S ribosomal subunit. Contacts protein L32.

This chain is Large ribosomal subunit protein bL17, found in Nitratidesulfovibrio vulgaris (strain ATCC 29579 / DSM 644 / CCUG 34227 / NCIMB 8303 / VKM B-1760 / Hildenborough) (Desulfovibrio vulgaris).